A 250-amino-acid polypeptide reads, in one-letter code: Phosphonates import ATP-binding protein PhnC (250 aa).

The 246-residue stretch at 2 to 247 (ILFNNVNKVW…KLDAQAMKKI (246 aa)) folds into the ABC transporter domain. Position 35 to 42 (35 to 42 (GLSGAGKT)) interacts with ATP.

The protein belongs to the ABC transporter superfamily. Phosphonates importer (TC 3.A.1.9.1) family. In terms of assembly, the complex is composed of two ATP-binding proteins (PhnC), two transmembrane proteins (PhnE) and a solute-binding protein (PhnD).

It localises to the cell membrane. It catalyses the reaction phosphonate(out) + ATP + H2O = phosphonate(in) + ADP + phosphate + H(+). In terms of biological role, part of the ABC transporter complex PhnCDE involved in phosphonates import. Responsible for energy coupling to the transport system. In Mycoplasma capricolum subsp. capricolum (strain California kid / ATCC 27343 / NCTC 10154), this protein is Phosphonates import ATP-binding protein PhnC.